The primary structure comprises 24 residues: Osteocalcin (24 aa).

The Gla domain occupies 1–24; it reads REVCELNPDCDELADHIGFQEAYR. Residues Glu2, Glu5, and Asp11 each contribute to the Ca(2+) site. 2 positions are modified to 4-carboxyglutamate: Glu2 and Glu5. Residues Cys4 and Cys10 are joined by a disulfide bond.

It belongs to the osteocalcin/matrix Gla protein family. In terms of processing, gamma-carboxyglutamate residues are formed by vitamin K dependent carboxylation by GGCX. These residues are essential for the binding of calcium. Decarboxylation promotes the hormone activity.

The protein resides in the secreted. The carboxylated form is one of the main organic components of the bone matrix, which constitutes 1-2% of the total bone protein: it acts as a negative regulator of bone formation and is required to limit bone formation without impairing bone resorption or mineralization. The carboxylated form binds strongly to apatite and calcium. In terms of biological role, the uncarboxylated form acts as a hormone secreted by osteoblasts, which regulates different cellular processes, such as energy metabolism, male fertility and brain development. Regulates of energy metabolism by acting as a hormone favoring pancreatic beta-cell proliferation, insulin secretion and sensitivity and energy expenditure. Uncarboxylated osteocalcin hormone also promotes testosterone production in the testes: acts as a ligand for G protein-coupled receptor GPRC6A at the surface of Leydig cells, initiating a signaling response that promotes the expression of enzymes required for testosterone synthesis in a CREB-dependent manner. Also acts as a regulator of brain development: osteocalcin hormone crosses the blood-brain barrier and acts as a ligand for GPR158 on neurons, initiating a signaling response that prevents neuronal apoptosis in the hippocampus, favors the synthesis of all monoamine neurotransmitters and inhibits that of gamma-aminobutyric acid (GABA). Osteocalcin also crosses the placenta during pregnancy and maternal osteocalcin is required for fetal brain development. This chain is Osteocalcin, found in Homo sapiens neanderthalensis (Neanderthal).